Consider the following 254-residue polypeptide: Thiazole synthase (254 aa).

Catalysis depends on Lys95, which acts as the Schiff-base intermediate with DXP. 1-deoxy-D-xylulose 5-phosphate is bound by residues Gly156, 182–183 (AG), and 204–205 (NT).

This sequence belongs to the ThiG family. Homotetramer. Forms heterodimers with either ThiH or ThiS.

The protein resides in the cytoplasm. The catalysed reaction is [ThiS sulfur-carrier protein]-C-terminal-Gly-aminoethanethioate + 2-iminoacetate + 1-deoxy-D-xylulose 5-phosphate = [ThiS sulfur-carrier protein]-C-terminal Gly-Gly + 2-[(2R,5Z)-2-carboxy-4-methylthiazol-5(2H)-ylidene]ethyl phosphate + 2 H2O + H(+). It functions in the pathway cofactor biosynthesis; thiamine diphosphate biosynthesis. Catalyzes the rearrangement of 1-deoxy-D-xylulose 5-phosphate (DXP) to produce the thiazole phosphate moiety of thiamine. Sulfur is provided by the thiocarboxylate moiety of the carrier protein ThiS. In vitro, sulfur can be provided by H(2)S. The chain is Thiazole synthase from Shewanella sp. (strain W3-18-1).